The primary structure comprises 1401 residues: DNA-directed RNA polymerase subunit beta' (1401 aa).

Residues cysteine 70, cysteine 72, cysteine 85, and cysteine 88 each contribute to the Zn(2+) site. The Mg(2+) site is built by aspartate 460, aspartate 462, and aspartate 464. Cysteine 808, cysteine 882, cysteine 889, and cysteine 892 together coordinate Zn(2+).

This sequence belongs to the RNA polymerase beta' chain family. In terms of assembly, the RNAP catalytic core consists of 2 alpha, 1 beta, 1 beta' and 1 omega subunit. When a sigma factor is associated with the core the holoenzyme is formed, which can initiate transcription. Requires Mg(2+) as cofactor. Zn(2+) serves as cofactor.

It catalyses the reaction RNA(n) + a ribonucleoside 5'-triphosphate = RNA(n+1) + diphosphate. In terms of biological role, DNA-dependent RNA polymerase catalyzes the transcription of DNA into RNA using the four ribonucleoside triphosphates as substrates. The sequence is that of DNA-directed RNA polymerase subunit beta' from Legionella pneumophila (strain Corby).